The following is a 418-amino-acid chain: Ankyrin repeat domain-containing protein 61 (418 aa).

8 ANK repeats span residues 27-57, 74-103, 131-160, 166-195, 199-228, 233-272, 276-305, and 309-342; these read ALHS…NQPL, QPIF…DPEV, TRIQ…QVNA, NKHS…QVNA, SSMT…NVNC, TGNT…QVNA, EGQT…NVNI, and NGES…PLRL.

The polypeptide is Ankyrin repeat domain-containing protein 61 (Ankrd61) (Rattus norvegicus (Rat)).